Reading from the N-terminus, the 158-residue chain is Transcriptional repressor NrdR (158 aa).

A zinc finger lies at 3–34 (CPSCQNTDSRVLESRAAEGGRSVRRRRECLNC). Residues 49–139 (ITVIKRNGHR…VYRHFRSVSD (91 aa)) enclose the ATP-cone domain.

The protein belongs to the NrdR family. Zn(2+) serves as cofactor.

Functionally, negatively regulates transcription of bacterial ribonucleotide reductase nrd genes and operons by binding to NrdR-boxes. The sequence is that of Transcriptional repressor NrdR from Synechococcus sp. (strain CC9311).